A 371-amino-acid chain; its full sequence is Chorismate synthase (371 aa).

Residues Arg-48 and Arg-54 each coordinate NADP(+). FMN-binding positions include 131–133, 245–246, Gly-290, 305–309, and Arg-331; these read RSS, NA, and KPTSS.

Belongs to the chorismate synthase family. Homotetramer. It depends on FMNH2 as a cofactor.

It carries out the reaction 5-O-(1-carboxyvinyl)-3-phosphoshikimate = chorismate + phosphate. It functions in the pathway metabolic intermediate biosynthesis; chorismate biosynthesis; chorismate from D-erythrose 4-phosphate and phosphoenolpyruvate: step 7/7. In terms of biological role, catalyzes the anti-1,4-elimination of the C-3 phosphate and the C-6 proR hydrogen from 5-enolpyruvylshikimate-3-phosphate (EPSP) to yield chorismate, which is the branch point compound that serves as the starting substrate for the three terminal pathways of aromatic amino acid biosynthesis. This reaction introduces a second double bond into the aromatic ring system. The protein is Chorismate synthase of Mesorhizobium japonicum (strain LMG 29417 / CECT 9101 / MAFF 303099) (Mesorhizobium loti (strain MAFF 303099)).